The primary structure comprises 255 residues: Ribonuclease HII (255 aa).

Residues 70-255 (EYIAGVDEVG…FEPVKKILLK (186 aa)) enclose the RNase H type-2 domain. A divalent metal cation is bound by residues Asp-76, Glu-77, and Asp-168.

This sequence belongs to the RNase HII family. Mn(2+) is required as a cofactor. Requires Mg(2+) as cofactor.

Its subcellular location is the cytoplasm. The enzyme catalyses Endonucleolytic cleavage to 5'-phosphomonoester.. Its function is as follows. Endonuclease that specifically degrades the RNA of RNA-DNA hybrids. In Ligilactobacillus salivarius (strain UCC118) (Lactobacillus salivarius), this protein is Ribonuclease HII.